Consider the following 99-residue polypeptide: UPF0125 protein PM0166 (99 aa).

It belongs to the UPF0125 (RnfH) family.

The chain is UPF0125 protein PM0166 from Pasteurella multocida (strain Pm70).